We begin with the raw amino-acid sequence, 551 residues long: Transcription factor 7-like 1-B (551 aa).

Positions 1 to 11 (MPQLNSGGGDE) are enriched in gly residues. The tract at residues 1 to 61 (MPQLNSGGGD…SENHSSDSDS (61 aa)) is interaction with CTNNB1-A. Disordered regions lie at residues 1-77 (MPQL…EKPR), 183-213 (GTPPGHLSPEIDPKTGIPRPPHPSELSPYYP), 391-474 (WSAR…SLTT), and 492-515 (SPSSSSLSGHLPSPVGSPLLSRPI). 2 stretches are compositionally biased toward basic and acidic residues: residues 17-32 (ELIRFKDEGEQEEKSP) and 52-77 (SENHSSDSDSEVERRPPPRETFEKPR). Residues 109–312 (LGGHYLPNGA…SPNLSTKSNV (204 aa)) form an interaction with AES and TLE4-A region. The segment at residues 324–392 (IKKPLNAFML…LHSQLYPSWS (69 aa)) is a DNA-binding region (HMG box). Positions 407 to 416 (KQSPEMENYT) are enriched in basic and acidic residues. Residues 408 to 551 (QSPEMENYTK…PLSLVTRSSD (144 aa)) are interaction with CTBP-B. Residues 445–464 (SPATPSAALASPAAPAATHS) are compositionally biased toward low complexity. The segment covering 465–474 (EQAQPLSLTT) has biased composition (polar residues).

The protein belongs to the TCF/LEF family. Interacts with csnk1e, ctnnb1-A, ctbp-B, dact1-A and gsk3b. May interact with ase and tle4-A. Interacts with tle1-B. In terms of processing, phosphorylated. Phosphorylation by csnk1e promotes binding to ctnnb1-A while phosphorylation by gsk3b may reverse this effect.

The protein localises to the nucleus. Functionally, participates in the Wnt signaling pathway. Binds to DNA and acts as a repressor in the absence of ctnnb1-A and possibly ctnnb1-B, and as an activator in the presence of these proteins. Required early in development for the establishment of the dorsal body axis in response to maternal Wnt signaling. The sequence is that of Transcription factor 7-like 1-B (tcf7l1-b) from Xenopus laevis (African clawed frog).